We begin with the raw amino-acid sequence, 1014 residues long: Calcium-transporting ATPase 2, plasma membrane-type (1014 aa).

Met1 is modified (N-acetylmethionine). Topologically, residues 1 to 160 (MESYLNENFD…NKFAESEMRG (160 aa)) are cytoplasmic. The interaction with calmodulin stretch occupies residues 20–31 (VLEKWRNLCGVV). Residue Ser45 is modified to Phosphoserine; by CPK1. A helical membrane pass occupies residues 161–181 (FWVFVWEALQDMTLMILGVCA). At 182 to 199 (FVSLIVGIATEGWPKGSH) the chain is on the lumenal side. The chain crosses the membrane as a helical span at residues 200 to 220 (DGLGIAASILLVVFVTATSDY). Topologically, residues 221–348 (RQSLQFRDLD…DDETPLQVKL (128 aa)) are cytoplasmic. A helical membrane pass occupies residues 349-368 (NGVATIIGKIGLFFAVVTFA). Residues 369 to 398 (VLVQGMFMRKLSTGTHWVWSGDEALELLEY) are Lumenal-facing. Residues 399-416 (FAIAVTIVVVAVPEGLPL) traverse the membrane as a helical segment. Residues 417–810 (AVTLSLAFAM…KWGRSVYINI (394 aa)) lie on the Cytoplasmic side of the membrane. The active-site 4-aspartylphosphate intermediate is the Asp454. Mg(2+)-binding residues include Asp755 and Asp759. A helical transmembrane segment spans residues 811–829 (QKFVQFQLTVNVVALVVNF). Over 830-840 (SSACLTGSAPL) the chain is Lumenal. The helical transmembrane segment at 841–861 (TAVQLLWVNMIMDTLGALALA) threads the bilayer. Topologically, residues 862–881 (TEPPNDELMKRLPVGRRGNF) are cytoplasmic. A helical membrane pass occupies residues 882-904 (ITNAMWRNILGQAVYQFIVIWIL). The Lumenal portion of the chain corresponds to 905–916 (QAKGKAMFGLDG). A helical transmembrane segment spans residues 917-938 (PDSTLMLNTLIFNCFVFCQVFN). The Cytoplasmic portion of the chain corresponds to 939-956 (EISSREMEEIDVFKGILD). A helical transmembrane segment spans residues 957–978 (NYVFVVVIGATVFFQIIIIEFL). At 979 to 988 (GTFASTTPLT) the chain is on the lumenal side. The helical transmembrane segment at 989-1010 (ITQWIFSIFIGFLGMPIAAGLK) threads the bilayer. The Cytoplasmic segment spans residues 1011 to 1014 (TIPV).

The protein belongs to the cation transport ATPase (P-type) (TC 3.A.3) family. Type IIB subfamily.

The protein resides in the endoplasmic reticulum membrane. The enzyme catalyses Ca(2+)(in) + ATP + H2O = Ca(2+)(out) + ADP + phosphate + H(+). Activated by calmodulin. Functionally, this magnesium-dependent enzyme catalyzes the hydrolysis of ATP coupled with the translocation of calcium from the cytosol into the endoplasmic reticulum. The sequence is that of Calcium-transporting ATPase 2, plasma membrane-type (ACA2) from Arabidopsis thaliana (Mouse-ear cress).